A 557-amino-acid chain; its full sequence is Urocanate hydratase (557 aa).

NAD(+)-binding positions include 53–54 (GG), Gln-131, 177–179 (GMG), Asp-197, Arg-202, 243–244 (NA), 264–268 (QTSAH), 274–275 (YL), and Tyr-323. Residue Cys-411 is part of the active site. Gly-493 contacts NAD(+).

Belongs to the urocanase family. Requires NAD(+) as cofactor.

The protein resides in the cytoplasm. It carries out the reaction 4-imidazolone-5-propanoate = trans-urocanate + H2O. The protein operates within amino-acid degradation; L-histidine degradation into L-glutamate; N-formimidoyl-L-glutamate from L-histidine: step 2/3. Its function is as follows. Catalyzes the conversion of urocanate to 4-imidazolone-5-propionate. The protein is Urocanate hydratase of Hahella chejuensis (strain KCTC 2396).